Consider the following 202-residue polypeptide: Cytochrome c oxidase assembly protein CtaG (202 aa).

Residues 1–14 (MSENAGTPKKQGRN) lie on the Cytoplasmic side of the membrane. Residues 15 to 37 (NGAVVMMCLSFVFGMGAMSYAAV) form a helical; Signal-anchor for type II membrane protein membrane-spanning segment. Residues 38–202 (PLYRIFCQVT…GGAEKIEKKL (165 aa)) lie on the Periplasmic side of the membrane.

It belongs to the COX11/CtaG family.

It localises to the cell inner membrane. Its function is as follows. Exerts its effect at some terminal stage of cytochrome c oxidase synthesis, probably by being involved in the insertion of the copper B into subunit I. This is Cytochrome c oxidase assembly protein CtaG from Rhizobium johnstonii (strain DSM 114642 / LMG 32736 / 3841) (Rhizobium leguminosarum bv. viciae).